The chain runs to 862 residues: Protein argonaute-2 (862 aa).

One can recognise a PAZ domain in the interval 232–351 (PVIEFMCEVL…LPLEVCNIVA (120 aa)). Interaction with guide RNA stretches follow at residues 314-319 (YFKDRH) and 527-569 (GKTP…LCLK). Residues 520–821 (LVVVILPGKT…VAFRARYHLV (302 aa)) enclose the Piwi domain. Positions 590–593 (FQQP) are interaction with GW182 family members. Aspartate 600 contacts a divalent metal cation. The interval 653–663 (LIQFYKSTRFK) is interaction with GW182 family members. Aspartate 672 lines the a divalent metal cation pocket. 3 interaction with guide RNA regions span residues 712–713 (KR), 756–764 (HAGIQGTSR), and 793–815 (YVRCTRSVSIPAPAYYAHLVAFR). Histidine 810 lines the a divalent metal cation pocket. Residues 825–847 (HDSAEGSHTSGQSNGRDQQALAK) form a disordered region. Residues 830–841 (GSHTSGQSNGRD) are compositionally biased toward polar residues.

Belongs to the argonaute family. Ago subfamily. In terms of assembly, component of the RISC loading complex (RLC), or micro-RNA (miRNA) loading complex (miRLC), which is composed of dicer1, ago2 and tarbp2. Note that the trimeric RLC/miRLC is also referred to as RISC. The cofactor is Mg(2+). Mn(2+) is required as a cofactor.

It localises to the cytoplasm. Its subcellular location is the P-body. The enzyme catalyses Endonucleolytic cleavage to 5'-phosphomonoester.. Functionally, required for RNA-mediated gene silencing (RNAi) by the RNA-induced silencing complex (RISC). The 'minimal RISC' appears to include ago2 bound to a short guide RNA such as a microRNA (miRNA) or short interfering RNA (siRNA). These guide RNAs direct RISC to complementary mRNAs that are targets for RISC-mediated gene silencing. The precise mechanism of gene silencing depends on the degree of complementarity between the miRNA or siRNA and its target. Binding of RISC to a perfectly complementary mRNA generally results in silencing due to endonucleolytic cleavage of the mRNA specifically by ago2. Binding of RISC to a partially complementary mRNA results in silencing through inhibition of translation, and this is independent of endonuclease activity. The inhibition of translational initiation leads to the accumulation of the affected mRNA in cytoplasmic processing bodies (P-bodies), where mRNA degradation may subsequently occur. This Xenopus laevis (African clawed frog) protein is Protein argonaute-2 (ago2).